Here is a 130-residue protein sequence, read N- to C-terminus: Small ribosomal subunit protein uS9 (130 aa).

This sequence belongs to the universal ribosomal protein uS9 family.

The sequence is that of Small ribosomal subunit protein uS9 from Cupriavidus taiwanensis (strain DSM 17343 / BCRC 17206 / CCUG 44338 / CIP 107171 / LMG 19424 / R1) (Ralstonia taiwanensis (strain LMG 19424)).